A 191-amino-acid polypeptide reads, in one-letter code: uncharacterized protein (191 aa).

Disordered stretches follow at residues 1 to 42 and 145 to 191; these read MSEE…DADA and QNQE…IDLD. Basic and acidic residues-rich tracts occupy residues 11–26 and 147–178; these read PRPD…RATG and QERR…RDEG.

As to quaternary structure, it may form a heterotetramer of two glucokinase subunits (glk) with two ORF2 proteins.

May be involved in glucose transport or metabolism. This is an uncharacterized protein from Streptomyces coelicolor (strain ATCC BAA-471 / A3(2) / M145).